The primary structure comprises 414 residues: Nuclear hormone receptor family member nhr-213 (414 aa).

Residues Ile-21–Phe-99 constitute a DNA-binding region (nuclear receptor). 2 NR C4-type zinc fingers span residues Cys-24–Cys-44 and Cys-62–Cys-82. The NR LBD domain occupies Ser-162 to Cys-414.

The protein belongs to the nuclear hormone receptor family.

The protein resides in the nucleus. Orphan nuclear receptor. This Caenorhabditis elegans protein is Nuclear hormone receptor family member nhr-213 (nhr-213).